We begin with the raw amino-acid sequence, 239 residues long: Probable transcriptional regulatory protein Veis_4238 (239 aa).

A disordered region spans residues 1 to 22; the sequence is MAGHSKWANIQHRKGRQDEKRG.

It belongs to the TACO1 family.

The protein resides in the cytoplasm. The sequence is that of Probable transcriptional regulatory protein Veis_4238 from Verminephrobacter eiseniae (strain EF01-2).